The sequence spans 297 residues: Ribonuclease H2 subunit A (297 aa).

Positions 21-248 (PCVLGIDEAG…ASTIVEKRCV (228 aa)) constitute an RNase H type-2 domain. Residues Asp27, Glu28, and Asp138 each contribute to the a divalent metal cation site.

This sequence belongs to the RNase HII family. Eukaryotic subfamily. Mn(2+) serves as cofactor. It depends on Mg(2+) as a cofactor.

The enzyme catalyses Endonucleolytic cleavage to 5'-phosphomonoester.. Catalytic subunit of RNase HII, an endonuclease that specifically degrades the RNA of RNA:DNA hybrids. Participates in DNA replication, possibly by mediating the removal of lagging-strand Okazaki fragment RNA primers during DNA replication. Mediates the excision of single ribonucleotides from DNA:RNA duplexes. The chain is Ribonuclease H2 subunit A (rnh-2) from Caenorhabditis elegans.